A 193-amino-acid chain; its full sequence is 7-methyl-GTP pyrophosphatase (193 aa).

D70 acts as the Proton acceptor in catalysis.

The protein belongs to the Maf family. YceF subfamily. A divalent metal cation is required as a cofactor.

It is found in the cytoplasm. It carries out the reaction N(7)-methyl-GTP + H2O = N(7)-methyl-GMP + diphosphate + H(+). Its function is as follows. Nucleoside triphosphate pyrophosphatase that hydrolyzes 7-methyl-GTP (m(7)GTP). May have a dual role in cell division arrest and in preventing the incorporation of modified nucleotides into cellular nucleic acids. In Vibrio cholerae serotype O1 (strain ATCC 39315 / El Tor Inaba N16961), this protein is 7-methyl-GTP pyrophosphatase.